A 445-amino-acid chain; its full sequence is MSNILQSVPVNQKVGIAFSGGLDTSAALHWMRQKGAIPYAYTANLGQPDETDYNAIPEKAKAYGAELARLIDCREQLVAEGIAALQSGAFHISTAGVTYFNTTPLGRAVTGTMLVAAMKEDNVDIWGDGSTFKGNDIERFYRYGLLMNPALRIYKPWLDDAFINELGGRKEMSEFLIKSGFDYKMSTEKAYSTDSNILGATHEAKDLEELSSGMQIVEPIMGVAFWRDDVEVKRETVTVRFEEGRPIALNGVVYTDLVELMLEANRIGGRHGLGMSDQIENRIIEAKSRGIYEAPGLALLFIAYERLITGIHNEDTIEQYRESGRRLGRLLYQGRWFDPQAIMLREAAQRWVARAITGEVTIELRRGNDYSILNTVSANLTYAPERLSMEKVEDAPFSPADRIGQLTMRNLDITDTRHKLAIYSSAGLLTGNSSVALPSFEKDKK.

ATP-binding positions include 17-25 (AFSGGLDTS) and A43. Residue Y99 coordinates L-citrulline. Positions 129 and 131 each coordinate ATP. L-aspartate is bound by residues T131, N135, and D136. Position 135 (N135) interacts with L-citrulline. An ATP-binding site is contributed by D136. 2 residues coordinate L-citrulline: R139 and S192. An ATP-binding site is contributed by D194. L-citrulline is bound by residues T201, E203, and E280.

The protein belongs to the argininosuccinate synthase family. Type 2 subfamily. As to quaternary structure, homotetramer.

Its subcellular location is the cytoplasm. The catalysed reaction is L-citrulline + L-aspartate + ATP = 2-(N(omega)-L-arginino)succinate + AMP + diphosphate + H(+). It participates in amino-acid biosynthesis; L-arginine biosynthesis; L-arginine from L-ornithine and carbamoyl phosphate: step 2/3. The protein is Argininosuccinate synthase of Herminiimonas arsenicoxydans.